Reading from the N-terminus, the 507-residue chain is Sugar transport protein 6 (507 aa).

Residues 1-20 (MAVVVSNANAPAFEAKMTVY) lie on the Cytoplasmic side of the membrane. 12 helical membrane-spanning segments follow: residues 21–41 (VFIC…DIGI), 78–98 (FLQL…FVAS), 115–135 (IFFL…MLII), 138–158 (LFLG…LSEI), 165–185 (GGLN…ANIV), 199–219 (IALG…LLII), 280–300 (FIIG…AIMF), 318–338 (LSAV…IYLV), 345–365 (FLLL…GIIL), 381–401 (LVVV…WGPL), 418–438 (GFAV…QAFL), and 447–467 (GIFF…FFFI). Over 468 to 507 (PETKGIAIDDMRESVWKPHWFWKRYMLPEDDHHDIEKRNA) the chain is Cytoplasmic.

Belongs to the major facilitator superfamily. Sugar transporter (TC 2.A.1.1) family. Pollen specific.

Its subcellular location is the membrane. With respect to regulation, inhibited by uncouplers such as 2,4-dinitrophenol and carbonyl cyanide-m-chlorophenyl-hydrazone. Functionally, mediates an active uptake of hexoses, probably by sugar/hydrogen symport. Can transport glucose, 3-O-methylglucose, mannose, fructose and galactose, and, to a lower extent, xylose and ribulose. The chain is Sugar transport protein 6 (STP6) from Arabidopsis thaliana (Mouse-ear cress).